Reading from the N-terminus, the 301-residue chain is Tail tube protein (301 aa).

This sequence belongs to the skunalikevirus tail tube protein family. In terms of assembly, homohexamer. The tube is composed of 31 hexameric rings.

It is found in the virion. Its function is as follows. Forms the cylindrical rigid tail tube. This is Tail tube protein from Lactococcus phage F4-1 (Lactococcus lactis bacteriophage F4-1).